We begin with the raw amino-acid sequence, 85 residues long: Latartoxin-1a (85 aa).

An N-terminal signal peptide occupies residues 1-19; sequence MKVLVFAIVCSVLLQVVLS. Positions 20–25 are cleaved as a propeptide — removed in mature form; it reads ADEEAR. The Processing quadruplet motif motif lies at 22–25; the sequence is EEAR. Intrachain disulfides connect C27/C42, C34/C47, C41/C64, and C49/C62.

Belongs to the neurotoxin 19 (CSTX) family. In terms of processing, contains 4 disulfide bonds. Post-translationally, cleavage of the propeptide depends on the processing quadruplet motif (XXXR, with at least one of X being E). Expressed by the venom gland.

It localises to the secreted. Functionally, insect toxin. Causes paralysis in larvae of C.vicina by depolarizing membranes at the neuromuscular junction. The polypeptide is Latartoxin-1a (Lachesana tarabaevi (Spider)).